The sequence spans 548 residues: MAAKDVKFGNDARVKMLKGVNVLADAVKVTLGPKGRHVILDKSFGAPTITKDGVSVAREIELEDKFENMGAQMVKEVASKANDAAGDGTTTATVLAQAIVNEGLKAVAAGMNPMDLKRGIDKAVSAVVSELKNLSKPCETAKEIEQVGTISANSDSIVGQLISQAMEKVGKEGVITVEDGTGLEDELDVVEGMQFDRGYLSPYFINKPETATVELDNPYLLLVDKKISNIRELLPVLEGVAKAGKPLLIIAEDVEGEALATLVVNTMRGIVKVAAVKAPGFGDRRKAMLQDIAILTAGTVISEEIGMELEKATLEDLGQAKRVVINKDNTTIIDGIGDEAQIKGRVAQIRQQIEESTSDYDKEKLQERVAKLAGGVAVIKVGAATEVEMKEKKDRVDDALHATRAAVEEGIVAGGGVALVRAAAKVAASLKGDNEEQNVGIKLALRAMEAPLRQIVTNAGEEASVVASAVKNGEGNFGYNAGTEQYGDMIEMGILDPTKVTRSALQFAASVAGLMITTECMVTDLPKDDKADLGAAGMGGMGGMGGMM.

Residues 30–33, lysine 51, 87–91, glycine 415, and aspartate 496 contribute to the ATP site; these read TLGP and DGTTT.

The protein belongs to the chaperonin (HSP60) family. In terms of assembly, forms a cylinder of 14 subunits composed of two heptameric rings stacked back-to-back. Interacts with the co-chaperonin GroES.

The protein resides in the cytoplasm. The enzyme catalyses ATP + H2O + a folded polypeptide = ADP + phosphate + an unfolded polypeptide.. In terms of biological role, together with its co-chaperonin GroES, plays an essential role in assisting protein folding. The GroEL-GroES system forms a nano-cage that allows encapsulation of the non-native substrate proteins and provides a physical environment optimized to promote and accelerate protein folding. The sequence is that of Chaperonin GroEL from Haemophilus influenzae (strain ATCC 51907 / DSM 11121 / KW20 / Rd).